The sequence spans 153 residues: Nucleoside diphosphate kinase (153 aa).

The ATP site is built by Lys12, Phe60, Arg88, Thr94, Arg105, and Asn115. His118 acts as the Pros-phosphohistidine intermediate in catalysis.

Belongs to the NDK family. Mg(2+) is required as a cofactor.

It localises to the cytoplasm. It carries out the reaction a 2'-deoxyribonucleoside 5'-diphosphate + ATP = a 2'-deoxyribonucleoside 5'-triphosphate + ADP. The enzyme catalyses a ribonucleoside 5'-diphosphate + ATP = a ribonucleoside 5'-triphosphate + ADP. Functionally, major role in the synthesis of nucleoside triphosphates other than ATP. The ATP gamma phosphate is transferred to the NDP beta phosphate via a ping-pong mechanism, using a phosphorylated active-site intermediate. The chain is Nucleoside diphosphate kinase from Natronomonas pharaonis (strain ATCC 35678 / DSM 2160 / CIP 103997 / JCM 8858 / NBRC 14720 / NCIMB 2260 / Gabara) (Halobacterium pharaonis).